Consider the following 221-residue polypeptide: UPF0758 protein YicR (221 aa).

Residues 99–221 form the MPN domain; that stretch reads ALLSPEMTRE…YVSFAERGWI (123 aa). 3 residues coordinate Zn(2+): His-170, His-172, and Asp-183. A JAMM motif motif is present at residues 170 to 183; it reads HNHPSGCAEPSKAD.

It belongs to the UPF0758 family. YicR subfamily.

The sequence is that of UPF0758 protein YicR from Salmonella newport (strain SL254).